Reading from the N-terminus, the 131-residue chain is Holo-[acyl-carrier-protein] synthase (131 aa).

Mg(2+) contacts are provided by Asp8 and Glu59.

Belongs to the P-Pant transferase superfamily. AcpS family. The cofactor is Mg(2+).

Its subcellular location is the cytoplasm. The catalysed reaction is apo-[ACP] + CoA = holo-[ACP] + adenosine 3',5'-bisphosphate + H(+). Its function is as follows. Transfers the 4'-phosphopantetheine moiety from coenzyme A to a Ser of acyl-carrier-protein. This chain is Holo-[acyl-carrier-protein] synthase, found in Rickettsia rickettsii (strain Iowa).